Consider the following 1234-residue polypeptide: Formin-like protein 3 (1234 aa).

The region spanning 1-208 (MRLDSFPASI…QYVARRNISP (208 aa)) is the Phosphatase tensin-type domain. The active-site Phosphocysteine intermediate is cysteine 141. In terms of domain architecture, C2 tensin-type spans 214-352 (ERALSFDCLI…FRAEMLFCEL (139 aa)). Disordered stretches follow at residues 443-478 (DSDEEKYSVASDSVSSSEHEKVQPGGNSSDSENINH) and 492-840 (LVNT…LKPL). Residues 498–507 (VLPPTTPPPC) show a composition bias toward pro residues. Positions 524 to 534 (VQHESPSDRKL) are enriched in basic and acidic residues. Composition is skewed to pro residues over residues 536 to 576 (SPSP…PPLP), 584 to 656 (QPPP…PPAP), 663 to 673 (PAPPPPPPPPR), 688 to 699 (GPPPPPPPPLPP), 709 to 721 (PSAPPPPPPPPPA), 729 to 739 (APAPPLPPPLP), and 762 to 784 (PAPPPPPPQAPKPPGTVPPPPPL). In terms of domain architecture, FH2 spans 827 to 1226 (QQSNPPKKAS…KLEKDKEKAT (400 aa)).

Belongs to the formin-like family. Class-II subfamily.

This Oryza sativa subsp. japonica (Rice) protein is Formin-like protein 3 (FH3).